The primary structure comprises 101 residues: MATIANPRDIILAPVVSEKSYGLMEQNVYTFFVARDANKTQIKIAVEEIFGVKVASVNTVNREGKRKRSRSGFGVRKATKRAYVTLREGSDSIDIFNGSVA.

It belongs to the universal ribosomal protein uL23 family. In terms of assembly, part of the 50S ribosomal subunit. Contacts protein L29, and trigger factor when it is bound to the ribosome.

Its function is as follows. One of the early assembly proteins it binds 23S rRNA. One of the proteins that surrounds the polypeptide exit tunnel on the outside of the ribosome. Forms the main docking site for trigger factor binding to the ribosome. In Corynebacterium efficiens (strain DSM 44549 / YS-314 / AJ 12310 / JCM 11189 / NBRC 100395), this protein is Large ribosomal subunit protein uL23.